The sequence spans 1047 residues: Ribonucleoside-diphosphate reductase subunit alpha (1047 aa).

ATP-cone domains lie at 9–111, 118–219, and 237–327; these read CTIV…KAHR, LSVV…ARVR, and VEVL…EALG. Substrate-binding positions include Thr-442, 457 to 458, Gly-486, 670 to 674, and 857 to 861; these read SC, NLCTE, and PTATI. A disulfide bond links Cys-458 and Cys-687. The active-site Proton acceptor is the Asn-670. The active-site Cysteine radical intermediate is Cys-672. Glu-674 functions as the Proton acceptor in the catalytic mechanism.

This sequence belongs to the ribonucleoside diphosphate reductase large chain family. Tetramer of two alpha and two beta subunits.

The catalysed reaction is a 2'-deoxyribonucleoside 5'-diphosphate + [thioredoxin]-disulfide + H2O = a ribonucleoside 5'-diphosphate + [thioredoxin]-dithiol. Its activity is regulated as follows. Under complex allosteric control mediated by deoxynucleoside triphosphates and ATP binding. The type of nucleotide bound at the specificity site determines substrate preference. It seems probable that ATP makes the enzyme reduce CDP and UDP, dGTP favors ADP reduction and dTTP favors GDP reduction. Functionally, provides the precursors necessary for DNA synthesis. Catalyzes the biosynthesis of deoxyribonucleotides from the corresponding ribonucleotides. This chain is Ribonucleoside-diphosphate reductase subunit alpha (nrdA), found in Chlamydia trachomatis serovar D (strain ATCC VR-885 / DSM 19411 / UW-3/Cx).